A 207-amino-acid polypeptide reads, in one-letter code: Thymidylate kinase (207 aa).

7-14 contributes to the ATP binding site; sequence GCEGTGKT.

This sequence belongs to the thymidylate kinase family.

It catalyses the reaction dTMP + ATP = dTDP + ADP. Functionally, phosphorylation of dTMP to form dTDP in both de novo and salvage pathways of dTTP synthesis. The protein is Thymidylate kinase of Aster yellows witches'-broom phytoplasma (strain AYWB).